Reading from the N-terminus, the 610-residue chain is UvrABC system protein C (610 aa).

Residues 16–94 enclose the GIY-YIG domain; sequence SQPGVYRMYD…IKLYQPRYNV (79 aa). The UVR domain maps to 204–239; the sequence is QQVLTRLIERMEQASQQLKFEDAARYRDQIQAVRQV.

Belongs to the UvrC family. Interacts with UvrB in an incision complex.

It is found in the cytoplasm. In terms of biological role, the UvrABC repair system catalyzes the recognition and processing of DNA lesions. UvrC both incises the 5' and 3' sides of the lesion. The N-terminal half is responsible for the 3' incision and the C-terminal half is responsible for the 5' incision. In Photorhabdus laumondii subsp. laumondii (strain DSM 15139 / CIP 105565 / TT01) (Photorhabdus luminescens subsp. laumondii), this protein is UvrABC system protein C.